The following is a 212-amino-acid chain: Thiamine-phosphate synthase (212 aa).

4-amino-2-methyl-5-(diphosphooxymethyl)pyrimidine is bound by residues Gln-33–Lys-37 and Asn-65. Mg(2+) is bound by residues Asp-66 and Asp-85. Thr-104 provides a ligand contact to 4-amino-2-methyl-5-(diphosphooxymethyl)pyrimidine. Residue Thr-130–Thr-132 participates in 2-[(2R,5Z)-2-carboxy-4-methylthiazol-5(2H)-ylidene]ethyl phosphate binding. 4-amino-2-methyl-5-(diphosphooxymethyl)pyrimidine is bound at residue Lys-133. Gly-166 is a binding site for 2-[(2R,5Z)-2-carboxy-4-methylthiazol-5(2H)-ylidene]ethyl phosphate.

This sequence belongs to the thiamine-phosphate synthase family. Mg(2+) is required as a cofactor.

It carries out the reaction 2-[(2R,5Z)-2-carboxy-4-methylthiazol-5(2H)-ylidene]ethyl phosphate + 4-amino-2-methyl-5-(diphosphooxymethyl)pyrimidine + 2 H(+) = thiamine phosphate + CO2 + diphosphate. It catalyses the reaction 2-(2-carboxy-4-methylthiazol-5-yl)ethyl phosphate + 4-amino-2-methyl-5-(diphosphooxymethyl)pyrimidine + 2 H(+) = thiamine phosphate + CO2 + diphosphate. The catalysed reaction is 4-methyl-5-(2-phosphooxyethyl)-thiazole + 4-amino-2-methyl-5-(diphosphooxymethyl)pyrimidine + H(+) = thiamine phosphate + diphosphate. It participates in cofactor biosynthesis; thiamine diphosphate biosynthesis; thiamine phosphate from 4-amino-2-methyl-5-diphosphomethylpyrimidine and 4-methyl-5-(2-phosphoethyl)-thiazole: step 1/1. Its function is as follows. Condenses 4-methyl-5-(beta-hydroxyethyl)thiazole monophosphate (THZ-P) and 2-methyl-4-amino-5-hydroxymethyl pyrimidine pyrophosphate (HMP-PP) to form thiamine monophosphate (TMP). The sequence is that of Thiamine-phosphate synthase from Flavobacterium johnsoniae (strain ATCC 17061 / DSM 2064 / JCM 8514 / BCRC 14874 / CCUG 350202 / NBRC 14942 / NCIMB 11054 / UW101) (Cytophaga johnsonae).